The primary structure comprises 477 residues: Chromosomal replication initiator protein DnaA (477 aa).

The interval 1–87 is domain I, interacts with DnaA modulators; sequence MSDRSDPTHA…AGVSNFAIVV (87 aa). Residues 87-132 form a domain II region; it reads VNPEIAQDAFAQHPEPAAEQPYIETPTITAPTDNPGLPASPSRGDS. The tract at residues 112–131 is disordered; it reads PTITAPTDNPGLPASPSRGD. The segment at 133-349 is domain III, AAA+ region; that stretch reads RLNPKYGFDT…GTLIRVTAFA (217 aa). ATP contacts are provided by Gly177, Gly179, Lys180, and Thr181. The tract at residues 350–477 is domain IV, binds dsDNA; sequence SLNKTPVDLA…IKQNHRYGKM (128 aa).

Belongs to the DnaA family. As to quaternary structure, oligomerizes as a right-handed, spiral filament on DNA at oriC.

Its subcellular location is the cytoplasm. Functionally, plays an essential role in the initiation and regulation of chromosomal replication. ATP-DnaA binds to the origin of replication (oriC) to initiate formation of the DNA replication initiation complex once per cell cycle. Binds the DnaA box (a 9 base pair repeat at the origin) and separates the double-stranded (ds)DNA. Forms a right-handed helical filament on oriC DNA; dsDNA binds to the exterior of the filament while single-stranded (ss)DNA is stabiized in the filament's interior. The ATP-DnaA-oriC complex binds and stabilizes one strand of the AT-rich DNA unwinding element (DUE), permitting loading of DNA polymerase. After initiation quickly degrades to an ADP-DnaA complex that is not apt for DNA replication. Binds acidic phospholipids. In Clavibacter michiganensis subsp. michiganensis (strain NCPPB 382), this protein is Chromosomal replication initiator protein DnaA.